A 574-amino-acid polypeptide reads, in one-letter code: VAO-type flavoprotein oxidase VAO615 (574 aa).

Residues 1–17 (MPASLLRFLALAGTAVG) form the signal peptide. Cystine bridges form between cysteine 28–cysteine 572, cysteine 64–cysteine 77, cysteine 108–cysteine 118, and cysteine 450–cysteine 476. N-linked (GlcNAc...) asparagine glycosylation is present at asparagine 47. Asparagine 105 is a glycosylation site (N-linked (GlcNAc...) asparagine). The FAD-binding PCMH-type domain occupies 120–299 (LGNYPSYVVN…LSMTARLHRD (180 aa)). Asparagine 129, asparagine 211, asparagine 310, asparagine 346, and asparagine 438 each carry an N-linked (GlcNAc...) asparagine glycan. Positions 157 to 222 (HDYLGKSTGK…TGHRIVGGTC (66 aa)) form a cross-link, 6-(S-cysteinyl)-8alpha-(pros-histidyl)-FAD (His-Cys).

This sequence belongs to the oxygen-dependent FAD-linked oxidoreductase family. FAD serves as cofactor. Post-translationally, the FAD cofactor is bound via a bicovalent 6-S-cysteinyl, 8alpha-N1-histidyl FAD linkage.

Its subcellular location is the secreted. Functionally, probably oxidoreductase that, when reduced, rapidly reacts with molecular oxygen, a hallmark of flavoprotein oxidases. A large panel of alcohols, including carbohydrates, steroids and secondary alcohols were tested as potential substrates, but none has been identified so far. This Thermothelomyces thermophilus (strain ATCC 42464 / BCRC 31852 / DSM 1799) (Sporotrichum thermophile) protein is VAO-type flavoprotein oxidase VAO615.